Here is a 190-residue protein sequence, read N- to C-terminus: Peptidyl-prolyl cis-trans isomerase A (190 aa).

The N-terminal stretch at Met1–Ala24 is a signal peptide. In terms of domain architecture, PPIase cyclophilin-type spans Gly27–Val188.

Belongs to the cyclophilin-type PPIase family.

Its subcellular location is the periplasm. It carries out the reaction [protein]-peptidylproline (omega=180) = [protein]-peptidylproline (omega=0). Its function is as follows. PPIases accelerate the folding of proteins. It catalyzes the cis-trans isomerization of proline imidic peptide bonds in oligopeptides. This Escherichia coli O157:H7 protein is Peptidyl-prolyl cis-trans isomerase A (ppiA).